A 201-amino-acid polypeptide reads, in one-letter code: tRNA (guanine-N(7)-)-methyltransferase (201 aa).

Positions 33, 58, 85, and 108 each coordinate S-adenosyl-L-methionine. Asp-108 is a catalytic residue. The substrate site is built by Lys-112 and Asp-144.

This sequence belongs to the class I-like SAM-binding methyltransferase superfamily. TrmB family.

It carries out the reaction guanosine(46) in tRNA + S-adenosyl-L-methionine = N(7)-methylguanosine(46) in tRNA + S-adenosyl-L-homocysteine. It participates in tRNA modification; N(7)-methylguanine-tRNA biosynthesis. Its function is as follows. Catalyzes the formation of N(7)-methylguanine at position 46 (m7G46) in tRNA. The sequence is that of tRNA (guanine-N(7)-)-methyltransferase from Anaeromyxobacter dehalogenans (strain 2CP-C).